The following is a 497-amino-acid chain: Glycerol kinase (497 aa).

T12 provides a ligand contact to ADP. 3 residues coordinate ATP: T12, T13, and S14. T12 contacts sn-glycerol 3-phosphate. Position 16 (R16) interacts with ADP. The sn-glycerol 3-phosphate site is built by R82, E83, Y134, and D243. The glycerol site is built by R82, E83, Y134, D243, and Q244. Residues T265 and G308 each coordinate ADP. ATP is bound by residues T265, G308, Q312, and G411. An ADP-binding site is contributed by G411.

The protein belongs to the FGGY kinase family.

The catalysed reaction is glycerol + ATP = sn-glycerol 3-phosphate + ADP + H(+). The protein operates within polyol metabolism; glycerol degradation via glycerol kinase pathway; sn-glycerol 3-phosphate from glycerol: step 1/1. With respect to regulation, inhibited by fructose 1,6-bisphosphate (FBP). Key enzyme in the regulation of glycerol uptake and metabolism. Catalyzes the phosphorylation of glycerol to yield sn-glycerol 3-phosphate. The polypeptide is Glycerol kinase (Allorhizobium ampelinum (strain ATCC BAA-846 / DSM 112012 / S4) (Agrobacterium vitis (strain S4))).